The sequence spans 453 residues: MKFSAVILAAGKGTRMYSNMPKVLHTLAGKPMVKHVIDTCTGLGAQNIHLVYGHGGDQMQAALAEEPVNWVLQAEQLGTGHAVDQASPQFEDDEKILVLYGDVPLISSETIESLLDAQPKGGIALLTVVLDNPTGYGRIVRKNGPVVAIVEQKDANEEQKLIKEINTGVMVATGGDLKRWLAGLNNDNAQGEYYLTDVIAAAHDEGNAVEAVHPVSPIEVEGVNDRAQLARLERAFQAAQAKKLLEQGVMLRDPARFDLRGELQCGLDVEIDVNVIIEGNVSLGDNVVIGAGCVLKDCEIDDNTIVRPYSVIEGATVGEQCTVGPFTRLRPGAEMRNDSHVGNFVEVKNACIGEGSKANHLTYLGDAEIGQRTNIGAGTITCNYDGANKFKTIIGNDVFVGSDSQLVAPVTIADGATIGAGTTLTKDVAEGELVITRAKERKITGWQRPVKKK.

Positions 1–226 are pyrophosphorylase; that stretch reads MKFSAVILAA…PIEVEGVNDR (226 aa). Residues 8-11, Lys22, Gln73, 78-79, 100-102, Gly137, Glu151, Asn166, and Asn224 contribute to the UDP-N-acetyl-alpha-D-glucosamine site; these read LAAG, GT, and YGD. A Mg(2+)-binding site is contributed by Asp102. Residue Asn224 participates in Mg(2+) binding. Positions 227 to 247 are linker; that stretch reads AQLARLERAFQAAQAKKLLEQ. The interval 248-453 is N-acetyltransferase; it reads GVMLRDPARF…TGWQRPVKKK (206 aa). The UDP-N-acetyl-alpha-D-glucosamine site is built by Arg330 and Lys348. The active-site Proton acceptor is His360. Residues Tyr363 and Asn374 each coordinate UDP-N-acetyl-alpha-D-glucosamine. Acetyl-CoA contacts are provided by residues Ala377, 383 to 384, Ser402, Ala420, and Arg437; that span reads NY.

This sequence in the N-terminal section; belongs to the N-acetylglucosamine-1-phosphate uridyltransferase family. The protein in the C-terminal section; belongs to the transferase hexapeptide repeat family. As to quaternary structure, homotrimer. It depends on Mg(2+) as a cofactor.

The protein resides in the cytoplasm. It catalyses the reaction alpha-D-glucosamine 1-phosphate + acetyl-CoA = N-acetyl-alpha-D-glucosamine 1-phosphate + CoA + H(+). The catalysed reaction is N-acetyl-alpha-D-glucosamine 1-phosphate + UTP + H(+) = UDP-N-acetyl-alpha-D-glucosamine + diphosphate. It functions in the pathway nucleotide-sugar biosynthesis; UDP-N-acetyl-alpha-D-glucosamine biosynthesis; N-acetyl-alpha-D-glucosamine 1-phosphate from alpha-D-glucosamine 6-phosphate (route II): step 2/2. It participates in nucleotide-sugar biosynthesis; UDP-N-acetyl-alpha-D-glucosamine biosynthesis; UDP-N-acetyl-alpha-D-glucosamine from N-acetyl-alpha-D-glucosamine 1-phosphate: step 1/1. The protein operates within bacterial outer membrane biogenesis; LPS lipid A biosynthesis. Its function is as follows. Catalyzes the last two sequential reactions in the de novo biosynthetic pathway for UDP-N-acetylglucosamine (UDP-GlcNAc). The C-terminal domain catalyzes the transfer of acetyl group from acetyl coenzyme A to glucosamine-1-phosphate (GlcN-1-P) to produce N-acetylglucosamine-1-phosphate (GlcNAc-1-P), which is converted into UDP-GlcNAc by the transfer of uridine 5-monophosphate (from uridine 5-triphosphate), a reaction catalyzed by the N-terminal domain. This chain is Bifunctional protein GlmU, found in Vibrio vulnificus (strain YJ016).